The primary structure comprises 303 residues: Bifunctional protein FolD (303 aa).

NADP(+) contacts are provided by residues 165 to 167, Ser190, and Ile231; that span reads GRS.

Belongs to the tetrahydrofolate dehydrogenase/cyclohydrolase family. Homodimer.

It carries out the reaction (6R)-5,10-methylene-5,6,7,8-tetrahydrofolate + NADP(+) = (6R)-5,10-methenyltetrahydrofolate + NADPH. It catalyses the reaction (6R)-5,10-methenyltetrahydrofolate + H2O = (6R)-10-formyltetrahydrofolate + H(+). Its pathway is one-carbon metabolism; tetrahydrofolate interconversion. Functionally, catalyzes the oxidation of 5,10-methylenetetrahydrofolate to 5,10-methenyltetrahydrofolate and then the hydrolysis of 5,10-methenyltetrahydrofolate to 10-formyltetrahydrofolate. This chain is Bifunctional protein FolD, found in Prochlorococcus marinus (strain NATL2A).